The primary structure comprises 594 residues: Cationic amino acid transporter 1 (594 aa).

Ala-2 bears the N-acetylalanine mark. Topologically, residues Ala-2–Asp-78 are cytoplasmic. Residues Leu-79–Glu-99 traverse the membrane as a helical segment. Residues Ala-100–Ser-104 are Extracellular-facing. Asn-102 is a glycosylation site (N-linked (GlcNAc...) asparagine). The helical transmembrane segment at Gly-105–Cys-125 threads the bilayer. Residues Tyr-126–Asp-149 are Cytoplasmic-facing. The chain crosses the membrane as a helical span at residues Phe-150–Val-170. The Extracellular segment spans residues Ala-171–Ser-201. A helical transmembrane segment spans residues His-202–Thr-222. Over Lys-223–Arg-227 the chain is Cytoplasmic. A helical membrane pass occupies residues Phe-228–Phe-248. Residues Thr-249–Gly-266 lie on the Extracellular side of the membrane. Asn-255 carries an N-linked (GlcNAc...) asparagine glycan. The helical transmembrane segment at Val-267–Met-287 threads the bilayer. At Ala-288–Asp-297 the chain is on the cytoplasmic side. Residues Ile-298–Val-318 traverse the membrane as a helical segment. Topologically, residues Thr-319–Lys-348 are extracellular. A helical transmembrane segment spans residues Tyr-349–Gly-369. The Cytoplasmic portion of the chain corresponds to Gln-370–Lys-393. A helical membrane pass occupies residues Thr-394–Phe-414. Residues Thr-415–Lys-418 are Extracellular-facing. Residues Ile-419–Leu-439 form a helical membrane-spanning segment. The Cytoplasmic segment spans residues Leu-440–Lys-457. A helical transmembrane segment spans residues Phe-458–Leu-478. Residues Glu-479–Trp-483 are Extracellular-facing. Residues Ile-484–Val-504 traverse the membrane as a helical segment. Over Pro-505–Lys-511 the chain is Cytoplasmic. A helical membrane pass occupies residues Ile-512–Leu-532. Residues Leu-533 to Arg-543 lie on the Extracellular side of the membrane. The helical transmembrane segment at Phe-544–Tyr-564 threads the bilayer. The Cytoplasmic portion of the chain corresponds to Asp-565–Thr-594.

This sequence belongs to the amino acid-polyamine-organocation (APC) superfamily. Cationic amino acid transporter (CAT) (TC 2.A.3.3) family. As to expression, expressed in roots, stems, flowers, petioles, seeds, siliques, and leaves. Mostly present in major veins.

It is found in the membrane. With respect to regulation, inhibited by the protonophore 2,4-dinitrophenol. Its function is as follows. High-affinity permease involved in the transport of the cationic amino acids (e.g. arginine, lysine, histidine, citrulline, valine, and glutamate). Transport mostly basic amino acids, and, to a lower extent neutral and acidic amino acids. May function as a proton symporter. The sequence is that of Cationic amino acid transporter 1 (CAT1) from Arabidopsis thaliana (Mouse-ear cress).